A 315-amino-acid polypeptide reads, in one-letter code: tRNA dimethylallyltransferase (315 aa).

13 to 20 (GPTASGKS) contacts ATP. 15–20 (TASGKS) is a substrate binding site. Interaction with substrate tRNA regions lie at residues 38 to 41 (DSMQ) and 162 to 166 (QRLAR).

Belongs to the IPP transferase family. As to quaternary structure, monomer. It depends on Mg(2+) as a cofactor.

The catalysed reaction is adenosine(37) in tRNA + dimethylallyl diphosphate = N(6)-dimethylallyladenosine(37) in tRNA + diphosphate. Functionally, catalyzes the transfer of a dimethylallyl group onto the adenine at position 37 in tRNAs that read codons beginning with uridine, leading to the formation of N6-(dimethylallyl)adenosine (i(6)A). This is tRNA dimethylallyltransferase from Paramagnetospirillum magneticum (strain ATCC 700264 / AMB-1) (Magnetospirillum magneticum).